Here is a 156-residue protein sequence, read N- to C-terminus: Small ribosomal subunit protein uS7 (156 aa).

Belongs to the universal ribosomal protein uS7 family. Part of the 30S ribosomal subunit. Contacts proteins S9 and S11.

In terms of biological role, one of the primary rRNA binding proteins, it binds directly to 16S rRNA where it nucleates assembly of the head domain of the 30S subunit. Is located at the subunit interface close to the decoding center, probably blocks exit of the E-site tRNA. This is Small ribosomal subunit protein uS7 from Ralstonia nicotianae (strain ATCC BAA-1114 / GMI1000) (Ralstonia solanacearum).